An 855-amino-acid chain; its full sequence is Transcription factor gaf1 (855 aa).

Positions 72 to 112 are enriched in polar residues; that stretch reads KNLTPNGDSNTLTPDTFSDPTAPSSAQSVPPTSSAETTADN. 6 disordered regions span residues 72-126, 149-184, 229-287, 412-483, 602-643, and 680-768; these read KNLT…PAYS, TSFD…ESQP, SHNL…GFPS, PNSN…DMFS, NKNA…TRTT, and KKRN…SQSM. Residues 149-168 show a composition bias toward basic and acidic residues; sequence TSFDESTAKSKKRSIADSHF. Ser150 bears the Phosphoserine mark. Low complexity-rich tracts occupy residues 240-250 and 428-444; these read PANSNNSASPN and NSSK…DSNQ. Positions 445 to 476 are enriched in polar residues; it reads ENAESFNPSISSHNSAEWASGETTGHSSNSPL. The span at 614 to 623 shows a compositional bias: basic and acidic residues; it reads AEDKKGDANT. 2 stretches are compositionally biased toward low complexity: residues 625–643 and 707–717; these read RANA…TRTT and SKSSSAKSTAA. A GATA-type zinc finger spans residues 635-659; the sequence is CTNCQTRTTPLWRRSPDGQPLCNAC. Ser727 and Ser729 each carry phosphoserine. A compositionally biased stretch (low complexity) spans 755–767; it reads QQQSSENESKSQS.

The protein resides in the nucleus. Its function is as follows. Transcriptional activator. The protein is Transcription factor gaf1 (gaf1) of Schizosaccharomyces pombe (strain 972 / ATCC 24843) (Fission yeast).